Here is a 690-residue protein sequence, read N- to C-terminus: MPRQYSLKMTRNIGIMAHIDAGKTTTTERILFHTGKIHKTGETHDGASQMDWMAQEQERGITITSAATTSVWRDHRVNIIDTPGHVDFTVEVSRSLRVLDGAVTVIDAQAGVEPQTETVWRQATEYKVPRIVYVNKMDKIGADFNNAIKTLHRRLGVKANAIQLPIGTELDFSGIIDLVTMTAVEYSGDALETTKEIPIPAHLEEQAIDMRNELIEAVAEFDDELMVTYLEGEEVSVELLKRAIRKGVLAVEFFPVVAGSSFKNKGVRKVLDAVIDYLPSPLDIPPVLGHTSEGVEVYRHADDEEPFTALAFKVMTDPFVGKLTFFRVYSGKIKSGSYVQNTTKGERERFGRILQMHANTRQEIDEVYAGDIAAAVGLKVTTTGNTLATQNDDIILESMNFPEPVIEVAVEPKTKNDQDKMGQALAKLAEEDPTFKTYTNTETGQTIIAGMGELHLDILVDRMKREFKVEANVTEPQVSYRETLTVPNEIEAKFIRQSGGRGQYGHVVIDFEPNPGKGFEFVDKIVGGVIPREYIPSVQKGLEEALGGGILAGFPVVDIKATLKFGSYHDVDSSEMAYKIAASMALKDAKNKANAVILEPIMDVEVVTPNDYVGNVIGDITSRRGRLESQEGRGNAISIRAFVPLSEMFGYATSLRSNTQGRATFVMQFDHFDKVPKSIQEEIIKKRGSN.

One can recognise a tr-type G domain in the interval 8–282 (KMTRNIGIMA…AVIDYLPSPL (275 aa)). GTP contacts are provided by residues 17 to 24 (AHIDAGKT), 81 to 85 (DTPGH), and 135 to 138 (NKMD).

It belongs to the TRAFAC class translation factor GTPase superfamily. Classic translation factor GTPase family. EF-G/EF-2 subfamily.

The protein resides in the cytoplasm. Its function is as follows. Catalyzes the GTP-dependent ribosomal translocation step during translation elongation. During this step, the ribosome changes from the pre-translocational (PRE) to the post-translocational (POST) state as the newly formed A-site-bound peptidyl-tRNA and P-site-bound deacylated tRNA move to the P and E sites, respectively. Catalyzes the coordinated movement of the two tRNA molecules, the mRNA and conformational changes in the ribosome. In Acholeplasma laidlawii (strain PG-8A), this protein is Elongation factor G.